Reading from the N-terminus, the 416-residue chain is Multifunctional CCA protein (416 aa).

ATP is bound by residues Gly-8 and Arg-11. Positions 8 and 11 each coordinate CTP. Mg(2+)-binding residues include Asp-21 and Asp-23. Residues Arg-91, Arg-137, and Arg-140 each contribute to the ATP site. CTP-binding residues include Arg-91, Arg-137, and Arg-140. The region spanning 228-329 (TGLHTMMVLA…IKLFDKADFW (102 aa)) is the HD domain.

It belongs to the tRNA nucleotidyltransferase/poly(A) polymerase family. Bacterial CCA-adding enzyme type 1 subfamily. Monomer. Can also form homodimers and oligomers. Mg(2+) is required as a cofactor. It depends on Ni(2+) as a cofactor.

The catalysed reaction is a tRNA precursor + 2 CTP + ATP = a tRNA with a 3' CCA end + 3 diphosphate. It catalyses the reaction a tRNA with a 3' CCA end + 2 CTP + ATP = a tRNA with a 3' CCACCA end + 3 diphosphate. In terms of biological role, catalyzes the addition and repair of the essential 3'-terminal CCA sequence in tRNAs without using a nucleic acid template. Adds these three nucleotides in the order of C, C, and A to the tRNA nucleotide-73, using CTP and ATP as substrates and producing inorganic pyrophosphate. tRNA 3'-terminal CCA addition is required both for tRNA processing and repair. Also involved in tRNA surveillance by mediating tandem CCA addition to generate a CCACCA at the 3' terminus of unstable tRNAs. While stable tRNAs receive only 3'-terminal CCA, unstable tRNAs are marked with CCACCA and rapidly degraded. This chain is Multifunctional CCA protein, found in Shewanella sp. (strain MR-7).